The primary structure comprises 503 residues: Opine oxidase subunit A (503 aa).

This sequence to T-protein and to dimethylglycine dehydrogenase. Heterodimer of a subunit A and a subunit B.

Its pathway is opine metabolism; octopine degradation. In terms of biological role, oxidative cleavage of octopine into L-arginine and pyruvate. This Agrobacterium tumefaciens (strain Ach5) protein is Opine oxidase subunit A (ooxA).